The chain runs to 251 residues: PF03932 family protein CutC (251 aa).

Belongs to the CutC family.

It is found in the cytoplasm. In Erwinia tasmaniensis (strain DSM 17950 / CFBP 7177 / CIP 109463 / NCPPB 4357 / Et1/99), this protein is PF03932 family protein CutC.